A 212-amino-acid chain; its full sequence is Small ribosomal subunit protein eS1 (212 aa).

Belongs to the eukaryotic ribosomal protein eS1 family.

The chain is Small ribosomal subunit protein eS1 from Ignicoccus hospitalis (strain KIN4/I / DSM 18386 / JCM 14125).